Reading from the N-terminus, the 333-residue chain is Adenosine deaminase (333 aa).

His12 and His14 together coordinate Zn(2+). The substrate site is built by His14, Asp16, and Gly170. Position 197 (His197) interacts with Zn(2+). The active-site Proton donor is Glu200. Asp278 provides a ligand contact to Zn(2+). Asp279 is a binding site for substrate.

Belongs to the metallo-dependent hydrolases superfamily. Adenosine and AMP deaminases family. Adenosine deaminase subfamily. The cofactor is Zn(2+).

It carries out the reaction adenosine + H2O + H(+) = inosine + NH4(+). It catalyses the reaction 2'-deoxyadenosine + H2O + H(+) = 2'-deoxyinosine + NH4(+). Its function is as follows. Catalyzes the hydrolytic deamination of adenosine and 2-deoxyadenosine. The sequence is that of Adenosine deaminase from Pseudoalteromonas translucida (strain TAC 125).